Here is a 188-residue protein sequence, read N- to C-terminus: Large ribosomal subunit protein eL18 (188 aa).

A Glycyl lysine isopeptide (Lys-Gly) (interchain with G-Cter in SUMO2) cross-link involves residue K119. S130 carries the post-translational modification Phosphoserine. Residues 150–188 (RHFGKAPRTPHSHTKPYVRSKGRKFERARGRWASRGYKN) are disordered. 2 stretches are compositionally biased toward basic residues: residues 151–171 (HFGK…RSKG) and 179–188 (GRWASRGYKN). Residue T158 is modified to Phosphothreonine. K164 is covalently cross-linked (Glycyl lysine isopeptide (Lys-Gly) (interchain with G-Cter in SUMO2)).

The protein belongs to the eukaryotic ribosomal protein eL18 family. Component of the large ribosomal subunit.

The protein localises to the cytoplasm. Its subcellular location is the cytosol. It is found in the rough endoplasmic reticulum. In terms of biological role, component of the large ribosomal subunit. The ribosome is a large ribonucleoprotein complex responsible for the synthesis of proteins in the cell. The polypeptide is Large ribosomal subunit protein eL18 (RPL18) (Oryctolagus cuniculus (Rabbit)).